A 325-amino-acid chain; its full sequence is uncharacterized protein (325 aa).

The N-terminal stretch at 1-26 (MQGRVAGSCAPLGLLLVCLHLPGLFA) is a signal peptide. Residues 41-60 (GTNLPQLGQPSSTGPSNSEH) show a composition bias toward polar residues. 2 disordered regions span residues 41-110 (GTNL…MDSW) and 147-189 (GSGP…AGGK). Residues 147–157 (GSGPLPGESSP) show a composition bias toward low complexity.

Binds to numerous extracellular matrix proteins. As to expression, expressed in skin and tonsils.

Its subcellular location is the secreted. The protein localises to the extracellular space. It localises to the extracellular matrix. This is an uncharacterized protein from Homo sapiens (Human).